A 369-amino-acid chain; its full sequence is Mannose-1-phosphate guanylyltransferase catalytic subunit beta (369 aa).

The tract at residues R12 to P231 is substrate-binding domain. D120 contributes to the GDP-alpha-D-mannose binding site. Position 120 (D120) interacts with Mg(2+). K171 is an active-site residue. D227 is a binding site for GDP-alpha-D-mannose. D227 lines the Mg(2+) pocket. Residues Y254 to M369 are hexapeptide repeat domain.

The protein belongs to the transferase hexapeptide repeat family. Component of the GMPPA-GMPPB mannose-1-phosphate guanylyltransferase complex composed of 4 Gmppa subunits and 8 Gmppb subunits; the complex is organized into three layers, a central layer made up of 2 Gmppa dimers sandwiched between two layers each made up of 2 Gmppb dimers. Gmppb catalytic activity is reduced when part of the complex and binding of GDP-alpha-D-Mannose by Gmppa induces allosteric feedback inhibition of Gmppb. Requires Mg(2+) as cofactor.

The enzyme catalyses alpha-D-mannose 1-phosphate + GTP + H(+) = GDP-alpha-D-mannose + diphosphate. The protein operates within nucleotide-sugar biosynthesis; GDP-alpha-D-mannose biosynthesis; GDP-alpha-D-mannose from alpha-D-mannose 1-phosphate (GTP route): step 1/1. With respect to regulation, enzyme activity is reduced by incorporation into the GMPPA-GMPPB mannose-1-phosphate guanylyltransferase complex. Allosterically inhibited, when part of the GMPPA-GMPPB complex, by GDP-alpha-D-mannose binding to Gmppa. Functionally, catalytic subunit of the GMPPA-GMPPB mannose-1-phosphate guanylyltransferase complex. Catalyzes the formation of GDP-mannose, an essential precursor of glycan moieties of glycoproteins and glycolipids. Can catalyze the reverse reaction in vitro. Together with GMPPA regulates GDP-alpha-D-mannose levels. This chain is Mannose-1-phosphate guanylyltransferase catalytic subunit beta, found in Drosophila melanogaster (Fruit fly).